The primary structure comprises 103 residues: AAFALPAFASFEKDVITPAALEAVLNRKAPLSNIMMENDAIVNVIANVKTVISNPVLEEALLKTNHGVNGIPCGESCVWIPCITSAIGCSCKSKVCYRNSLDN.

An N-terminal signal peptide occupies residues 1–9 (AAFALPAFA). Residues 10–69 (SFEKDVITPAALEAVLNRKAPLSNIMMENDAIVNVIANVKTVISNPVLEEALLKTNHGVN) constitute a propeptide that is removed on maturation. Residues 70-99 (GIPCGESCVWIPCITSAIGCSCKSKVCYRN) constitute a cross-link (cyclopeptide (Gly-Asn)). 3 disulfide bridges follow: C73–C89, C77–C91, and C82–C96. The propeptide occupies 100-103 (SLDN).

Post-translationally, this is a cyclic peptide.

Its function is as follows. Probably participates in a plant defense mechanism. In Viola biflora (Yellow wood violet), this protein is Cyclotide vitri-A.